A 132-amino-acid chain; its full sequence is uncharacterized protein (132 aa).

The N-terminal stretch at 1–19 (MKKALFLVGLVFTAGVISS) is a signal peptide. The N-palmitoyl cysteine moiety is linked to residue cysteine 20. The S-diacylglycerol cysteine moiety is linked to residue cysteine 20.

It is found in the cell membrane. This is an uncharacterized protein from Aquifex aeolicus (strain VF5).